Here is a 264-residue protein sequence, read N- to C-terminus: ATP synthase subunit a (264 aa).

A run of 6 helical transmembrane segments spans residues 29-49, 87-107, 134-154, 177-197, 208-228, and 235-255; these read TWHI…LWIF, NALI…MNFM, DVNI…YYSI, IPVN…SLAL, LIFI…SLGV, and LIFH…LTIV.

This sequence belongs to the ATPase A chain family. In terms of assembly, F-type ATPases have 2 components, CF(1) - the catalytic core - and CF(0) - the membrane proton channel. CF(1) has five subunits: alpha(3), beta(3), gamma(1), delta(1), epsilon(1). CF(0) has three main subunits: a(1), b(2) and c(9-12). The alpha and beta chains form an alternating ring which encloses part of the gamma chain. CF(1) is attached to CF(0) by a central stalk formed by the gamma and epsilon chains, while a peripheral stalk is formed by the delta and b chains.

The protein localises to the cell inner membrane. In terms of biological role, key component of the proton channel; it plays a direct role in the translocation of protons across the membrane. The sequence is that of ATP synthase subunit a from Shewanella sp. (strain ANA-3).